The sequence spans 174 residues: Disulfide bond formation protein B (174 aa).

Residues 1-12 (MLNWIDTAPRRI) lie on the Cytoplasmic side of the membrane. Residues 13–29 (LALISAACVAMLAFGMY) traverse the membrane as a helical segment. Residues 30–47 (LQHVVGLEPCPMCIVQRY) are Periplasmic-facing. Cysteines 39 and 42 form a disulfide. The helical transmembrane segment at 48-64 (ALIGVAVFAGLASARGQ) threads the bilayer. The Cytoplasmic segment spans residues 65-69 (KGWWM). A helical transmembrane segment spans residues 70-87 (TWSVLALVAAGFGAFVAA). The Periplasmic portion of the chain corresponds to 88-143 (RQSWLQWYPPEIATCGRDFYGMIENYPISRAIPMIFRGSGDCTAVDWTFLGGSIAN). A disulfide bond links cysteine 102 and cysteine 129. A helical membrane pass occupies residues 144-162 (WSFVWFLLFAVLLLVLLVR). Residues 163–174 (GGRGAPDTLARA) lie on the Cytoplasmic side of the membrane.

Belongs to the DsbB family.

The protein localises to the cell inner membrane. Required for disulfide bond formation in some periplasmic proteins. Acts by oxidizing the DsbA protein. This is Disulfide bond formation protein B from Acidovorax sp. (strain JS42).